We begin with the raw amino-acid sequence, 379 residues long: Oxysterol-binding protein-related protein 4C (379 aa).

It belongs to the OSBP family. In terms of tissue distribution, expressed in flowers.

Its function is as follows. May be involved in the transport of sterols. The sequence is that of Oxysterol-binding protein-related protein 4C (ORP4C) from Arabidopsis thaliana (Mouse-ear cress).